The sequence spans 780 residues: Cullin-5 (780 aa).

A Phosphoserine modification is found at serine 34. Threonine 210 is modified (phosphothreonine). Residues leucine 713–aspartate 772 form the Cullin neddylation domain. Lysine 724 is covalently cross-linked (Glycyl lysine isopeptide (Lys-Gly) (interchain with G-Cter in NEDD8)).

This sequence belongs to the cullin family. In terms of assembly, component of multiple cullin-5-RING E3 ubiquitin-protein ligase complexes (ECS complexes, also named CRL5 complexes) formed of CUL5, Elongin BC (ELOB and ELOC), RNF7/RBX2 and a variable SOCS box domain-containing protein as substrate-specific recognition component. CUL5-containing ECS complexes specifically contain RNF7/RBX2, and not RBX1, as catalytic subunit. Component of the ECS(ASB2) complex with the substrate recognition component ASB2. Component of the ECS(ASB6) complex with the substrate recognition component ASB6. Component of the ECS(ASB7) complex with the substrate recognition component ASB7. Component of the ECS(ASB9) complex with the substrate recognition component ASB9. Component of the ECS(ASB11) complex with the substrate recognition component ASB11. Component of the ECS(ASB12) complex with the substrate recognition component ASB12. Component of the ECS(LRRC41) complex with the substrate recognition component LRRC41. Component of the ECS(SOCS1) complex with the substrate recognition component SOCS1. Component of the ECS(SOCS2) complex with the substrate recognition component SOCS2. Component of the ECS(WSB1) complex with the substrate recognition subunit WSB1. Component of the ECS(SOCS3) complex with the substrate recognition component SOCS3. Component of the ECS(SOCS7) complex with the substrate recognition component SOCS7. Component of the ECS(SPSB1) complex with the substrate recognition component SPSB1. Component of the ECS(SPSB3) complex with the substrate recognition component SPSB3. Component of the ECS(SPSB2) complex with the substrate recognition component SPSB2. Component of the ECS(SPSB4) complex with the substrate recognition component SPSB4. Component of the ECS(RAB40) complex with the substrate recognition subunit RAB40A, RAB40B or RAB40C. Component of the ECS(KLHDC1) complex with the substrate recognition component KLHDC1. Component of the ECS(PCMTD1) complex with the substrate recognition subunit PCMTD1. May also form complexes containing RBX1 and ELOA or VHL; additional evidence is however required to confirm this result in vivo. Interacts (when neddylated) with ARIH2; leading to activate the E3 ligase activity of ARIH2. Interacts with ERCC6; the interaction is induced by DNA damaging agents or inhibitors of RNA polymerase II elongation. Interacts with ELOA (via the BC-box). Interacts (unneddylated form) with DCUN1D1, DCUN1D2, DCUN1D3, DCUN1D4 and DCUN1D5; these interactions promote the cullin neddylation. Post-translationally, neddylated; which enhances the ubiquitination activity of ECS complexes and prevents binding of the inhibitor CAND1. Deneddylated via its interaction with the COP9 signalosome (CSN). Kidney collecting tubules.

The protein resides in the nucleus. The protein operates within protein modification; protein ubiquitination. Functionally, core component of multiple cullin-5-RING E3 ubiquitin-protein ligase complexes (ECS complexes, also named CRL5 complexes), which mediate the ubiquitination and subsequent proteasomal degradation of target proteins. Acts a scaffold protein that contributes to catalysis through positioning of the substrate and the ubiquitin-conjugating enzyme. The functional specificity of the E3 ubiquitin-protein ligase complex depends on the variable SOCS box-containing substrate recognition component. Acts as a key regulator of neuron positioning during cortex development: component of various SOCS-containing ECS complexes, such as the ECS(SOCS7) complex, that regulate reelin signaling by mediating ubiquitination and degradation of DAB1. ECS(SOCS1) seems to direct ubiquitination of JAK2. The ECS(SOCS2) complex mediates the ubiquitination and subsequent proteasomal degradation of phosphorylated EPOR and GHR. The ECS(SPSB3) complex catalyzes ubiquitination of nuclear CGAS. ECS(KLHDC1) complex is part of the DesCEND (destruction via C-end degrons) pathway and mediates ubiquitination and degradation of truncated SELENOS selenoprotein produced by failed UGA/Sec decoding, which ends with a glycine. The ECS(ASB9) complex mediates ubiquitination and degradation of CKB. As part of some ECS complex, promotes 'Lys-11'-linked ubiquitination and degradation of BTRC. As part of a multisubunit ECS complex, polyubiquitinates monoubiquitinated POLR2A. As part of the ECS(RAB40C) complex, mediates ANKRD28 ubiquitination and degradation, thereby regulating protein phosphatase 6 (PP6) complex activity and focal adhesion assembly during cell migration. As part of the ECS(RAB40A) complex, mediates RHOU 'Lys-48'-linked ubiquitination and degradation, thus inhibiting focal adhesion disassembly during cell migration. As part of the ECS(RAB40B) complex, mediates LIMA1/EPLIN and RAP2 ubiquitination, thereby regulating actin cytoskeleton dynamics and stress fiber formation during cell migration. May form a cell surface vasopressin receptor. The chain is Cullin-5 (CUL5) from Oryctolagus cuniculus (Rabbit).